We begin with the raw amino-acid sequence, 232 residues long: Sugar fermentation stimulation protein homolog (232 aa).

The protein belongs to the SfsA family.

The polypeptide is Sugar fermentation stimulation protein homolog (Magnetococcus marinus (strain ATCC BAA-1437 / JCM 17883 / MC-1)).